The sequence spans 442 residues: uncharacterized protein (442 aa).

In terms of domain architecture, ABC transporter spans 1–238 (MKAEGLSGGY…QSIKAVYDTD (238 aa)). 33–40 (GPNGSGKT) serves as a coordination point for ATP.

It belongs to the ABC transporter superfamily. The complex is composed of two ATP-binding proteins (YvrA), two transmembrane proteins (YvrB) and a solute-binding protein (YvrC).

Its function is as follows. Probably part of an ABC transporter complex. Probably responsible for energy coupling to the transport system. This is an uncharacterized protein from Bacillus subtilis (strain 168).